The primary structure comprises 103 residues: MAAVSLSVSTVKPLGDRVFVKVSESEEKTAGGILLPDTAKEKPQVGEVAQVGPGKRNEDGSRQAPEVGVGDKVLYSKYAGTDIKLGSDEYVLLSEKDILAVVN.

This sequence belongs to the GroES chaperonin family. Heptamer of 7 subunits arranged in a ring. Interacts with the chaperonin GroEL.

It localises to the cytoplasm. Together with the chaperonin GroEL, plays an essential role in assisting protein folding. The GroEL-GroES system forms a nano-cage that allows encapsulation of the non-native substrate proteins and provides a physical environment optimized to promote and accelerate protein folding. GroES binds to the apical surface of the GroEL ring, thereby capping the opening of the GroEL channel. The sequence is that of Co-chaperonin GroES from Prochlorococcus marinus (strain MIT 9211).